The following is a 111-amino-acid chain: Large ribosomal subunit protein uL24 (111 aa).

Belongs to the universal ribosomal protein uL24 family. In terms of assembly, part of the 50S ribosomal subunit.

Its function is as follows. One of two assembly initiator proteins, it binds directly to the 5'-end of the 23S rRNA, where it nucleates assembly of the 50S subunit. One of the proteins that surrounds the polypeptide exit tunnel on the outside of the subunit. The protein is Large ribosomal subunit protein uL24 of Bifidobacterium longum (strain DJO10A).